The chain runs to 362 residues: Putative RING-H2 finger protein ATL21B (362 aa).

Positions methionine 1–alanine 23 are cleaved as a signal peptide. A helical transmembrane segment spans residues valine 234–isoleucine 254. The segment at cysteine 316–arginine 358 adopts an RING-type; atypical zinc-finger fold.

It belongs to the RING-type zinc finger family. ATL subfamily.

The protein localises to the membrane. The enzyme catalyses S-ubiquitinyl-[E2 ubiquitin-conjugating enzyme]-L-cysteine + [acceptor protein]-L-lysine = [E2 ubiquitin-conjugating enzyme]-L-cysteine + N(6)-ubiquitinyl-[acceptor protein]-L-lysine.. The protein operates within protein modification; protein ubiquitination. In Arabidopsis thaliana (Mouse-ear cress), this protein is Putative RING-H2 finger protein ATL21B (ATL21B).